We begin with the raw amino-acid sequence, 131 residues long: Small ribosomal subunit protein eS8 (131 aa).

The interval 1-42 (MKLGAYYKGGDLKKPSGGKKRKVRKTKKKALGGGPPQIPKLG) is disordered. The segment covering 16 to 30 (SGGKKRKVRKTKKKA) has biased composition (basic residues).

This sequence belongs to the eukaryotic ribosomal protein eS8 family. In terms of assembly, part of the 30S ribosomal subunit.

The protein is Small ribosomal subunit protein eS8 of Pyrobaculum aerophilum (strain ATCC 51768 / DSM 7523 / JCM 9630 / CIP 104966 / NBRC 100827 / IM2).